The primary structure comprises 283 residues: Pantothenate synthetase (283 aa).

34-41 lines the ATP pocket; sequence MGALHDGH. The active-site Proton donor is His41. Gln65 lines the (R)-pantoate pocket. Residue Gln65 participates in beta-alanine binding. 152–155 is a binding site for ATP; the sequence is GEKD. Gln158 is a binding site for (R)-pantoate. ATP contacts are provided by residues Val181 and 189-192; that span reads MSSR.

This sequence belongs to the pantothenate synthetase family. Homodimer.

The protein localises to the cytoplasm. It catalyses the reaction (R)-pantoate + beta-alanine + ATP = (R)-pantothenate + AMP + diphosphate + H(+). Its pathway is cofactor biosynthesis; (R)-pantothenate biosynthesis; (R)-pantothenate from (R)-pantoate and beta-alanine: step 1/1. Catalyzes the condensation of pantoate with beta-alanine in an ATP-dependent reaction via a pantoyl-adenylate intermediate. This chain is Pantothenate synthetase, found in Bradyrhizobium sp. (strain BTAi1 / ATCC BAA-1182).